A 744-amino-acid chain; its full sequence is MSRKVTKYSAVLAVSLFAAALAGCGSENKEGTVGTGPGGVATVGDSACVQCHSAVTEALTGESLIAQYQKSSPHNTAGLGCESCHGGGAQHNGVGPIPFAQPDASRCADCHDGTTAVATNSDTAFAESRHNIQTIRSGATCRRCHTHEGAVLSNIAGYTGDLATLEDTVNQNKVPLVSSYSQISCATCHEHGGGLRTIKATNGAAGPVVNWDPNNNRTVDQFDLCTSCHNMYSYNGSTLLTNGVPVNGVATGTVGHHETTWYRIIATTHFDNYSTGPQAGAGASGTNAKVEGYVLRRTGANPCFDCHGHEAKTNTRPGRDATIHTDWAKSAHAGGLLTAKYNAVGALTGAAAVNAAMNAYVDDTTAIAWTHYNWDASSRGSCQRCHTATGAANFMSNPAGYDPTGAGNSFSHLQGWSAANGSKQNELLYCWGCHTNAGTGELRNPGAITENYAGVNSTSTGTTGTAVTISYPDIAGSNVCMTCHLGREAGENIKAITDADGILGFVNSHYLAAGGQLFGKTGYEYATRSYAKPTFFAHDKIGTAAAPGTGTNGPCAGCHMTTPNSHSFLPVTKDGTGAVTAITSTACATCHAGAYALTPEALTAEEEEYVASLEALKAALAGKGILFFNAHPYFYRDTNANGIGDPGELVSSNAFTNWAGVYGLALWKDVMGAAFNANLLIHDPGGYAHNRFYVKRLIWDSIDFIYDGVLNNDVTAAIDAQVTATRLDSATATAAKAYLGTTRP.

A signal peptide spans 1 to 23 (MSRKVTKYSAVLAVSLFAAALAG). Cys-24 carries the N-palmitoyl cysteine lipid modification. Cys-24 is lipidated: S-diacylglycerol cysteine. Heme c contacts are provided by Cys-48, Cys-51, His-52, Cys-81, Cys-84, His-85, Cys-107, Cys-110, His-111, Cys-141, Cys-144, His-145, Cys-185, Cys-188, His-189, Cys-225, Cys-228, His-229, Cys-303, Cys-306, His-307, Cys-382, Cys-385, His-386, Cys-430, Cys-433, His-434, Cys-480, Cys-483, His-484, Cys-555, Cys-558, His-559, Cys-587, Cys-590, and His-591.

Post-translationally, binds 12 heme c groups per subunit.

Its subcellular location is the cell outer membrane. Functionally, involved in anaerobic respiration with Fe(3+) as terminal electron acceptor. Acts as an electron-transport mediator in the dissimilatory reduction of Fe(3+). This Geobacter sulfurreducens (strain DL-1 / KN400) protein is C-type polyheme cytochrome OmcB (omcB).